A 683-amino-acid polypeptide reads, in one-letter code: Protein kinase C eta type (683 aa).

The 118-residue stretch at 1-118 folds into the C2 domain; it reads MSSGTMKFNG…LRTTGASDTF (118 aa). Phosphoserine; by autocatalysis is present on residues Ser28 and Ser32. 2 Phorbol-ester/DAG-type zinc fingers span residues 171-222 and 245-295; these read GHKF…VTAC and PHKF…APNC. Phosphoserine is present on Ser317. The interval 320-342 is disordered; sequence SKLVSRSTLRRQGKESSKEGNGI. Residues 355 to 614 enclose the Protein kinase domain; the sequence is FEFIRVLGKG…EHAILRHPFF (260 aa). Residues 361–369 and Lys384 contribute to the ATP site; that span reads LGKGSFGKV. The active-site Proton acceptor is Asp479. Thr513 is subject to Phosphothreonine; by PDPK1. One can recognise an AGC-kinase C-terminal domain in the interval 615 to 683; that stretch reads KEIDWAQLNH…FSYVSPELQP (69 aa). Thr656 carries the phosphothreonine modification. A Phosphoserine modification is found at Ser675.

Belongs to the protein kinase superfamily. AGC Ser/Thr protein kinase family. PKC subfamily. In terms of assembly, interacts with FYN. Interacts with RALA. Interacts with DGKQ. Interacts with PRKCH upstream open reading frame 2; the interaction leads to inhibition of kinase activity. Most abundant in lung, less in heart and skin.

The protein resides in the cytoplasm. The catalysed reaction is L-seryl-[protein] + ATP = O-phospho-L-seryl-[protein] + ADP + H(+). The enzyme catalyses L-threonyl-[protein] + ATP = O-phospho-L-threonyl-[protein] + ADP + H(+). Its activity is regulated as follows. Novel PKCs (PRKCD, PRKCE, PRKCH and PRKCQ) are calcium-insensitive, but activated by diacylglycerol (DAG) and phosphatidylserine. Three specific sites; Thr-513 (activation loop of the kinase domain), Thr-656 (turn motif) and Ser-675 (hydrophobic region), need to be phosphorylated for its full activation. Inhibited by PRKCH upstream open reading frame 2. In terms of biological role, calcium-independent, phospholipid- and diacylglycerol (DAG)-dependent serine/threonine-protein kinase that is involved in the regulation of cell differentiation in keratinocytes and pre-B cell receptor, mediates regulation of epithelial tight junction integrity and foam cell formation, and is required for glioblastoma proliferation and apoptosis prevention in MCF-7 cells. In keratinocytes, binds and activates the tyrosine kinase FYN, which in turn blocks epidermal growth factor receptor (EGFR) signaling and leads to keratinocyte growth arrest and differentiation. Associates with the cyclin CCNE1-CDK2-CDKN1B complex and inhibits CDK2 kinase activity, leading to RB1 dephosphorylation and thereby G1 arrest in keratinocytes. In association with RALA activates actin depolymerization, which is necessary for keratinocyte differentiation. In the pre-B cell receptor signaling, functions downstream of BLNK by up-regulating IRF4, which in turn activates L chain gene rearrangement. Regulates epithelial tight junctions (TJs) by phosphorylating occludin (OCLN) on threonine residues, which is necessary for the assembly and maintenance of TJs. In association with PLD2 and via TLR4 signaling, is involved in lipopolysaccharide (LPS)-induced RGS2 down-regulation and foam cell formation. Upon PMA stimulation, mediates glioblastoma cell proliferation by activating the mTOR pathway, the PI3K/AKT pathway and the ERK1-dependent phosphorylation of ELK1. Involved in the protection of glioblastoma cells from irradiation-induced apoptosis by preventing caspase-9 activation. In camptothecin-treated MCF-7 cells, regulates NF-kappa-B upstream signaling by activating IKBKB, and confers protection against DNA damage-induced apoptosis. Promotes oncogenic functions of ATF2 in the nucleus while blocking its apoptotic function at mitochondria. Phosphorylates ATF2 which promotes its nuclear retention and transcriptional activity and negatively regulates its mitochondrial localization. The protein is Protein kinase C eta type (PRKCH) of Homo sapiens (Human).